The primary structure comprises 239 residues: Protein G1-like8 (239 aa).

Disordered stretches follow at residues 1–35 (MEGG…RYES) and 149–239 (KARG…ATRV). The segment covering 9–29 (DAQAQAQPVAQAPPAMQPMQQ) has biased composition (low complexity). Positions 32 to 159 (RYESQKRRDW…ARGIPYEKKK (128 aa)) constitute an ALOG domain. Positions 157-161 (KKKRK) match the Nuclear localization signal motif. Residues 167–178 (QPPPQPPLPPQH) show a composition bias toward pro residues. Composition is skewed to low complexity over residues 179–215 (QPGA…ATSQ) and 223–239 (TTTT…ATRV).

It belongs to the plant homeotic and developmental regulators ALOG protein family.

It is found in the nucleus. Its function is as follows. Probable transcription regulator that acts as a developmental regulator by promoting cell growth in response to light. The polypeptide is Protein G1-like8 (Oryza sativa subsp. indica (Rice)).